Consider the following 192-residue polypeptide: Thymidine kinase (192 aa).

ATP-binding positions include 9-16 (SAMNAGKS) and 87-90 (DECQ). E88 functions as the Proton acceptor in the catalytic mechanism. Positions 145, 147, 182, and 185 each coordinate Zn(2+).

This sequence belongs to the thymidine kinase family. In terms of assembly, homotetramer.

The protein resides in the cytoplasm. The catalysed reaction is thymidine + ATP = dTMP + ADP + H(+). This Vibrio vulnificus (strain CMCP6) protein is Thymidine kinase.